A 139-amino-acid polypeptide reads, in one-letter code: 3-hydroxyacyl-[acyl-carrier-protein] dehydratase FabZ (139 aa).

Histidine 46 is a catalytic residue.

It belongs to the thioester dehydratase family. FabZ subfamily.

The protein localises to the cytoplasm. The enzyme catalyses a (3R)-hydroxyacyl-[ACP] = a (2E)-enoyl-[ACP] + H2O. Involved in unsaturated fatty acids biosynthesis. Catalyzes the dehydration of short chain beta-hydroxyacyl-ACPs and long chain saturated and unsaturated beta-hydroxyacyl-ACPs. The polypeptide is 3-hydroxyacyl-[acyl-carrier-protein] dehydratase FabZ (Streptococcus pyogenes serotype M1).